The chain runs to 64 residues: Prokaryotic ubiquitin-like protein UBact (64 aa).

Composition is skewed to basic and acidic residues over residues 1–12 and 33–64; these read MSDLFRMEERRQ and PDVK…RSGE. Positions 1-64 are disordered; sequence MSDLFRMEER…ARRYRQRSGE (64 aa). An Isoglutamyl lysine isopeptide (Glu-Lys) (interchain with K-? in acceptor proteins) cross-link involves residue E64.

It belongs to the ubiquitin-like protein UBact family.

Its function is as follows. May function as a protein modifier covalently attached to lysine residues of substrate proteins. This may serve to target the modified proteins for degradation by proteasomes. This is Prokaryotic ubiquitin-like protein UBact from Chthonomonas calidirosea (strain DSM 23976 / ICMP 18418 / T49).